Here is a 277-residue protein sequence, read N- to C-terminus: MRYWGKLLGLVLGVMYAPGVVGALLGLLVGHMVDRALGAKRRGFFADQQTRQSLFFRTTFQVMGHLTKAKGRVTEVDIQLASQLMDRMQLHGAARTAAQQAFREGKESHFPLRKALQEFRRVCFGRFDLIRIFLEIQLQAAFADGSLHPNERQVLYVIAEELGISRGQFDQFLRMFDGGRQFGGHGGWQGQQGGYSQSGYQRASQGPTLEDACKVLGVNSSDDSVAIKRAYRKLMGEHHPDKLVAKGLPPEMMEMAKQKAQEIQAAYDLIKREKGFK.

At 1-6 the chain is on the periplasmic side; the sequence is MRYWGK. A helical membrane pass occupies residues 7-31; sequence LLGLVLGVMYAPGVVGALLGLLVGH. Residues 32-277 are Cytoplasmic-facing; it reads MVDRALGAKR…DLIKREKGFK (246 aa). The 67-residue stretch at 211-277 folds into the J domain; it reads DACKVLGVNS…DLIKREKGFK (67 aa).

In terms of assembly, homodimer.

The protein resides in the cell inner membrane. In terms of biological role, regulatory DnaK co-chaperone. Direct interaction between DnaK and DjlA is needed for the induction of the wcaABCDE operon, involved in the synthesis of a colanic acid polysaccharide capsule, possibly through activation of the RcsB/RcsC phosphotransfer signaling pathway. The colanic acid capsule may help the bacterium survive conditions outside the host. The polypeptide is Co-chaperone protein DjlA (Yersinia pestis).